We begin with the raw amino-acid sequence, 450 residues long: ADP-specific phosphofructokinase (450 aa).

The 449-residue stretch at 1–449 (MIPEHLSIYT…FLTYLEFLKR (449 aa)) folds into the ADPK domain. The Mg(2+) site is built by E260, E290, and D433. The Proton acceptor role is filled by D433.

This sequence belongs to the carbohydrate kinase PfkC family. Mg(2+) serves as cofactor.

It localises to the cytoplasm. It carries out the reaction beta-D-fructose 6-phosphate + ADP = beta-D-fructose 1,6-bisphosphate + AMP + H(+). It participates in carbohydrate degradation; glycolysis. Its function is as follows. Catalyzes the phosphorylation of fructose 6-phosphate to fructose 1,6-bisphosphate using ADP as the phosphate donor. The protein is ADP-specific phosphofructokinase of Pyrococcus horikoshii (strain ATCC 700860 / DSM 12428 / JCM 9974 / NBRC 100139 / OT-3).